The following is a 172-amino-acid chain: Myosin regulatory light chain RLC-A (172 aa).

Basic residues predominate over residues 1–16 (MSSKRAKTKTTKKRPQ). Residues 1 to 20 (MSSKRAKTKTTKKRPQRATS) are disordered. Phosphothreonine; by MLCK is present on threonine 19. Serine 20 is modified (phosphoserine; by MLCK). 3 consecutive EF-hand domains span residues 29 to 64 (SQIQ…MGKN), 98 to 133 (DPED…MGDR), and 134 to 169 (FTDE…GAKD). Positions 42, 44, 46, and 53 each coordinate Ca(2+).

As to quaternary structure, myosin is a hexamer of 2 heavy chains and 4 light chains. Phosphorylation increases the actin-activated myosin ATPase activity and thereby regulates the contractile activity.

Functionally, myosin regulatory subunit that plays an important role in regulation of both smooth muscle and nonmuscle cell contractile activity via its phosphorylation. Implicated in cytokinesis, receptor capping, and cell locomotion. The chain is Myosin regulatory light chain RLC-A (Rlc-a) from Rattus norvegicus (Rat).